We begin with the raw amino-acid sequence, 88 residues long: UPF0298 protein Bcer98_2635 (88 aa).

The protein belongs to the UPF0298 family.

Its subcellular location is the cytoplasm. The sequence is that of UPF0298 protein Bcer98_2635 from Bacillus cytotoxicus (strain DSM 22905 / CIP 110041 / 391-98 / NVH 391-98).